A 451-amino-acid polypeptide reads, in one-letter code: MREIISIHLGQGGIQIGNACWELYCLEHGIQPDGSMPSDKAIGVEDDAFNTFFSETGAGKHVPRAVFLDLEPSVVDEVRTGTYRQLFHPEQLISGKEDAANNYARGHYTIGKEIVDLCLDRIRKLADNCTGLQGFLAFHAVGGGTGSGLGRLLLERLSVDYGKKSKLGFTIYPSPQISTAVVEPYNSVLSTHSLLEHTDVAVMLDNEAIYDICRRNLDIERPTYTNLNRLIAQVISSLTASLRFDGALNVDITEFQTNLVPYPRIHFVLSSYAPIISAEKAYHEQLSVAEITNAAFEPASMMAKCDPRHGKYMACCLMYRGDVVPKDVNASVATIKTKRTIQFVDWCPTGFKCGINYQPPTVVPGGDLAKVQRAVCMISNSTAIAEVFARIDHKFDLMYSKRAFVHWYVGEGMEEGEFSEAREDLAALEKDYEEVGAESADVEGEEDVEEY.

Glutamine 11 is a GTP binding site. Lysine 40 bears the N6-acetyllysine mark. GTP is bound by residues glutamate 71, glycine 144, threonine 145, threonine 179, asparagine 206, and asparagine 228. Glutamate 71 is a Mg(2+) binding site. Glutamate 254 is an active-site residue.

This sequence belongs to the tubulin family. As to quaternary structure, dimer of alpha and beta chains. A typical microtubule is a hollow water-filled tube with an outer diameter of 25 nm and an inner diameter of 15 nM. Alpha-beta heterodimers associate head-to-tail to form protofilaments running lengthwise along the microtubule wall with the beta-tubulin subunit facing the microtubule plus end conferring a structural polarity. Microtubules usually have 13 protofilaments but different protofilament numbers can be found in some organisms and specialized cells. Mg(2+) serves as cofactor. In terms of processing, undergoes a tyrosination/detyrosination cycle, the cyclic removal and re-addition of a C-terminal tyrosine residue by the enzymes tubulin tyrosine carboxypeptidase (TTCP) and tubulin tyrosine ligase (TTL), respectively. Acetylation of alpha chains at Lys-40 stabilizes microtubules and affects affinity and processivity of microtubule motors. This modification has a role in multiple cellular functions, ranging from cell motility, cell cycle progression or cell differentiation to intracellular trafficking and signaling.

It is found in the cytoplasm. The protein resides in the cytoskeleton. It catalyses the reaction GTP + H2O = GDP + phosphate + H(+). In terms of biological role, tubulin is the major constituent of microtubules, a cylinder consisting of laterally associated linear protofilaments composed of alpha- and beta-tubulin heterodimers. Microtubules grow by the addition of GTP-tubulin dimers to the microtubule end, where a stabilizing cap forms. Below the cap, tubulin dimers are in GDP-bound state, owing to GTPase activity of alpha-tubulin. In Euglena gracilis, this protein is Tubulin alpha chain (TUBA).